Reading from the N-terminus, the 492-residue chain is Transcript termination protein OPG145 (492 aa).

Positions 100–256 constitute a Helicase ATP-binding domain; sequence MIELKRPLYI…NSIINIAKLS (157 aa). Residue 113 to 120 participates in ATP binding; that stretch reads LACGFGKT. Residues 206 to 209 carry the DEAH box motif; it reads DESH.

It belongs to the helicase family. Poxviruses subfamily. In terms of assembly, interacts with OPG087. Might be part of a transcription complex composed at least of OPG087, OPG110, and OPG145.

It is found in the virion. DNA helicase which seems to act as a postreplicative transcription termination factor. Involved in ATP-dependent release of nascent RNA. Forms a stable complex with single-stranded DNA, and to a lesser extent RNA. This is Transcript termination protein OPG145 (OPG145) from Cynomys gunnisoni (Gunnison's prairie dog).